Here is a 272-residue protein sequence, read N- to C-terminus: Putative pyruvate, phosphate dikinase regulatory protein (272 aa).

151–158 lines the ADP pocket; the sequence is GISRTSKT.

The protein belongs to the pyruvate, phosphate/water dikinase regulatory protein family. PDRP subfamily.

The catalysed reaction is N(tele)-phospho-L-histidyl/L-threonyl-[pyruvate, phosphate dikinase] + ADP = N(tele)-phospho-L-histidyl/O-phospho-L-threonyl-[pyruvate, phosphate dikinase] + AMP + H(+). It catalyses the reaction N(tele)-phospho-L-histidyl/O-phospho-L-threonyl-[pyruvate, phosphate dikinase] + phosphate + H(+) = N(tele)-phospho-L-histidyl/L-threonyl-[pyruvate, phosphate dikinase] + diphosphate. In terms of biological role, bifunctional serine/threonine kinase and phosphorylase involved in the regulation of the pyruvate, phosphate dikinase (PPDK) by catalyzing its phosphorylation/dephosphorylation. The polypeptide is Putative pyruvate, phosphate dikinase regulatory protein (Staphylococcus aureus (strain USA300)).